The following is a 345-amino-acid chain: MANHAAKPLALTLGEPAGIGPDITIAGWLRRRELNLPAFYLLGDEALIARRAKTLDKTLGKALGAEIRIASVSAHEAAAAFTEALPVVATGERATAEPGQPDASSAPAALASIRQAVADVRAGRAGAVVTNPIAKSVLYRAGFRHPGHTEFLAELAAKDGRVPQPVMMLWSPRLAVVPVTIHVSLRDALSQLTSELIVSTVRIVATELKSRFGIARPRIAVSGLNPHAGEDGSLGHEEQTIIAPALKTLRNDGIDARGPLPADTMFHEAARSSYDCAVCMYHDQALIPIKTVAFDDAVNVTLGLPFIRTSPDHGTAFDIAGTGKANPASLIAALELASRMAAAKT.

Residues His-148 and Thr-149 each coordinate substrate. Residues His-182, His-227, and His-282 each contribute to the a divalent metal cation site. The substrate site is built by Lys-290, Asn-299, and Arg-308.

The protein belongs to the PdxA family. In terms of assembly, homodimer. Zn(2+) serves as cofactor. It depends on Mg(2+) as a cofactor. Requires Co(2+) as cofactor.

The protein localises to the cytoplasm. It catalyses the reaction 4-(phosphooxy)-L-threonine + NAD(+) = 3-amino-2-oxopropyl phosphate + CO2 + NADH. Its pathway is cofactor biosynthesis; pyridoxine 5'-phosphate biosynthesis; pyridoxine 5'-phosphate from D-erythrose 4-phosphate: step 4/5. Functionally, catalyzes the NAD(P)-dependent oxidation of 4-(phosphooxy)-L-threonine (HTP) into 2-amino-3-oxo-4-(phosphooxy)butyric acid which spontaneously decarboxylates to form 3-amino-2-oxopropyl phosphate (AHAP). This Bradyrhizobium diazoefficiens (strain JCM 10833 / BCRC 13528 / IAM 13628 / NBRC 14792 / USDA 110) protein is 4-hydroxythreonine-4-phosphate dehydrogenase.